The sequence spans 252 residues: uncharacterized protein (252 aa).

The helical transmembrane segment at 80–100 threads the bilayer; it reads LSVLVIGSTMFTHAGVLPVLA.

Its subcellular location is the host membrane. The protein resides in the virion. This is an uncharacterized protein from Acanthamoeba polyphaga mimivirus (APMV).